The chain runs to 808 residues: MEILFSISILALLFSGVVAAPSDDDVFEEVRVGLVVDLSSIQGKILETSFNLALSDFYGINNGYRTRVSVLVRDSQGDPIIALAAATDLLKNAKAEAIVGAQSLQEAKLLATISEKAKVPVISTFLPNTLSLKKYDNFIQWTHDTTSEAKGITSLIQDFSCKSVVVIYEDADDWSESLQILVENFQDKGIYIARSASFAVSSSGENHMMNQLRKLKVSRASVFVVHMSEILVSRLFQCVEKLGLMEEAFAWILTARTMNYLEHFAITRSMQGVIGFKSYIPVSEEVKNFTSRLRKRMGDDTETEHSSVIIGLRAHDIACILANAVEKFSVSGKVEASSNVSADLLDTIRHSRFKGLSGDIQISDNKFISETFEIVNIGREKQRRIGLWSGGSFSQRRQIVWPGRSRKIPRHRVLAEKGEKKVLRVLVTAGNKVPHLVSVRPDPETGVNTVSGFCVEVFKTCIAPFNYELEFIPYRGNNDNLAYLLSTQRDKYDAAVGDITITSNRSLYVDFTLPYTDIGIGILTVKKKSQGMWTFFDPFEKSLWLASGAFFVLTGIVVWLVERSVNPEFQGSWGQQLSMMLWFGFSTIVFAHREKLQKMSSRFLVIVWVFVVLILTSSYSANLTSTKTISRMQLNHQMVFGGSTTSMTAKLGSINAVEAYAQLLRDGTLNHVINEIPYLSILIGNYPNDFVMTDRVTNTNGFGFMFQKGSDLVPKVSREIAKLRSLGMLKDMEKKWFQKLDSLNVHSNTEEVASTNDDDEASKRFTFRELRGLFIIAGAAHVLVLALHLFHTRQEVSRLCTKLQSFYK.

Positions 1–19 (MEILFSISILALLFSGVVA) are cleaved as a signal peptide. Residues 20 to 541 (APSDDDVFEE…MWTFFDPFEK (522 aa)) are Extracellular-facing. 3 N-linked (GlcNAc...) asparagine glycosylation sites follow: Asn-288, Asn-339, and Asn-504. Residues 542-562 (SLWLASGAFFVLTGIVVWLVE) form a helical membrane-spanning segment. The Cytoplasmic portion of the chain corresponds to 563–570 (RSVNPEFQ). Residues 571-591 (GSWGQQLSMMLWFGFSTIVFA) form a helical membrane-spanning segment. Residues 592-602 (HREKLQKMSSR) lie on the Cytoplasmic side of the membrane. A helical membrane pass occupies residues 603–623 (FLVIVWVFVVLILTSSYSANL). Topologically, residues 624–771 (TSTKTISRMQ…SKRFTFRELR (148 aa)) are extracellular. A helical membrane pass occupies residues 772-792 (GLFIIAGAAHVLVLALHLFHT). Topologically, residues 793–808 (RQEVSRLCTKLQSFYK) are cytoplasmic.

This sequence belongs to the glutamate-gated ion channel (TC 1.A.10.1) family. As to quaternary structure, may form heteromers. Expressed predominantly in roots. First detected in the root-shoot junction, and later in lateral roots and at the margin of matures leaves.

The protein resides in the membrane. Functionally, glutamate-gated receptor that probably acts as a non-selective cation channel. Can transport sodium, potassium, and calcium ions. Functions as a carbon and nitrogen regulator and/or sensor that regulates carbon and nitrogen metabolism and distinct physiological process such as germination through the control of acid abscisic (ABA) biosynthesis. May be involved in light-signal transduction and calcium homeostasis via the regulation of calcium influx into cells. Seems required for the regulation of the abscisic acid (ABA) signaling pathway that modulates many aspects of plant physiology such as seed germination and response to drought (e.g. stomata opening). This chain is Glutamate receptor 1.1 (GLR1.1), found in Arabidopsis thaliana (Mouse-ear cress).